Reading from the N-terminus, the 549-residue chain is Chaperonin GroEL (549 aa).

ATP contacts are provided by residues 29 to 32 (TLGP), Lys-50, 86 to 90 (DGTTT), Gly-413, 479 to 481 (NAA), and Asp-496. Residues 522 to 549 (VSDKPEKPQQGGQGGGGMGGGDMGGMDF) form a disordered region. The span at 532–549 (GGQGGGGMGGGDMGGMDF) shows a compositional bias: gly residues.

Belongs to the chaperonin (HSP60) family. As to quaternary structure, forms a cylinder of 14 subunits composed of two heptameric rings stacked back-to-back. Interacts with the co-chaperonin GroES.

The protein resides in the cytoplasm. The catalysed reaction is ATP + H2O + a folded polypeptide = ADP + phosphate + an unfolded polypeptide.. In terms of biological role, together with its co-chaperonin GroES, plays an essential role in assisting protein folding. The GroEL-GroES system forms a nano-cage that allows encapsulation of the non-native substrate proteins and provides a physical environment optimized to promote and accelerate protein folding. This Deinococcus deserti (strain DSM 17065 / CIP 109153 / LMG 22923 / VCD115) protein is Chaperonin GroEL.